The chain runs to 254 residues: Phosphoribosylaminoimidazole-succinocarboxamide synthase (254 aa).

The protein belongs to the SAICAR synthetase family.

The catalysed reaction is 5-amino-1-(5-phospho-D-ribosyl)imidazole-4-carboxylate + L-aspartate + ATP = (2S)-2-[5-amino-1-(5-phospho-beta-D-ribosyl)imidazole-4-carboxamido]succinate + ADP + phosphate + 2 H(+). The protein operates within purine metabolism; IMP biosynthesis via de novo pathway; 5-amino-1-(5-phospho-D-ribosyl)imidazole-4-carboxamide from 5-amino-1-(5-phospho-D-ribosyl)imidazole-4-carboxylate: step 1/2. The chain is Phosphoribosylaminoimidazole-succinocarboxamide synthase from Gluconacetobacter diazotrophicus (strain ATCC 49037 / DSM 5601 / CCUG 37298 / CIP 103539 / LMG 7603 / PAl5).